A 242-amino-acid chain; its full sequence is Outer membrane protein class 4 (242 aa).

An N-terminal signal peptide occupies residues 1 to 22 (MTKQLKLSALFVALLASGTAVA). 7 consecutive repeat copies span residues 69-70 (AP), 71-72 (EP), 73-74 (EP), 75-76 (EP), 77-78 (EP), 79-80 (AP), and 81-82 (AP). The interval 69–82 (APEPEPEPEPAPAP) is 7 X 2 AA tandem repeats of X-P. In terms of domain architecture, OmpA-like spans 92 to 229 (YVDETISLSA…RVDVKIRSIV (138 aa)). Residues C191 and C214 are joined by a disulfide bond.

It belongs to the outer membrane OOP (TC 1.B.6) superfamily.

The protein localises to the cell outer membrane. The sequence is that of Outer membrane protein class 4 (rmpM) from Neisseria meningitidis serogroup A / serotype 4A (strain DSM 15465 / Z2491).